A 298-amino-acid chain; its full sequence is uncharacterized protein (298 aa).

10 helical membrane passes run 5-25, 36-56, 76-96, 97-117, 124-144, 147-167, 181-201, 216-236, 244-264, and 272-292; these read ILFGVSMILLANLCFGIMSAF, MENVFYRSITMTLLLLLIYPF, VVVGGLAMLAFFYNIEKISLA, TATAFSQCAPIYTVLLSPLLL, SALISACIGLVGVVLISDPSV, VGLVEIIMGILSGIFVSLAYI, VILAFAFGMSLLGLAGMFIDI, ILWISLIGISGTLGQYFLTYA, IIAPIEYTRIVWGLLFGLYLG, and SSLGVALILCSGLLIALPALL. The 125-residue stretch at 17–141 folds into the EamA 1 domain; sequence LCFGIMSAFV…GLVGVVLISD (125 aa). The 106-residue stretch at 183 to 288 folds into the EamA 2 domain; the sequence is LAFAFGMSLL…ILCSGLLIAL (106 aa).

The protein belongs to the EamA transporter family.

Its subcellular location is the cell membrane. This is an uncharacterized protein from Helicobacter pylori (strain J99 / ATCC 700824) (Campylobacter pylori J99).